The primary structure comprises 727 residues: Pre-B-cell leukemia transcription factor-interacting protein 1 (727 aa).

Residues 1-10 show a composition bias toward polar residues; sequence MASCPDSDNS. Residues 1–169 are disordered; it reads MASCPDSDNS…GREPSSSQPV (169 aa). Phosphoserine occurs at positions 131, 142, 143, and 144. The residue at position 148 (T148) is a Phosphothreonine. A Phosphoserine modification is found at S164. Coiled-coil stretches lie at residues 270 to 350 and 377 to 405; these read FLLD…RGVD and DPSLLEQHKQLEAEAKALRQELQRQWQLL. Positions 446-456 are enriched in polar residues; that stretch reads QGINTGRSPND. 2 disordered regions span residues 446–565 and 694–727; these read QGIN…NSPD and LKKRSRKKEKHSWNPRVVGPREEHSRHPHHYHQG. A compositionally biased stretch (basic and acidic residues) spans 473-563; the sequence is WGGKEKWRGG…QKHSWGKDNS (91 aa). A Nuclear localization signal motif is present at residues 486 to 506; it reads QKAEHWKPRKEESGQERQRSW. Residue S563 is modified to Phosphoserine. The Nuclear localization signal motif lies at 691–716; the sequence is DKALKKRSRKKEKHSWNPRVVGPREE. Over residues 694–703 the composition is skewed to basic residues; the sequence is LKKRSRKKEK.

Interacts with ESR1, PBX1, PBX2 and PBX3. Interacts with TEX11.

The protein resides in the cytoplasm. It is found in the cytoskeleton. The protein localises to the nucleus. Regulator of pre-B-cell leukemia transcription factors (BPXs) function. Inhibits the binding of PBX1-HOX complex to DNA and blocks the transcriptional activity of E2A-PBX1. Tethers estrogen receptor-alpha (ESR1) to microtubules and allows them to influence estrogen receptors-alpha signaling. This Mus musculus (Mouse) protein is Pre-B-cell leukemia transcription factor-interacting protein 1 (Pbxip1).